A 210-amino-acid polypeptide reads, in one-letter code: Orotate phosphoribosyltransferase (210 aa).

5-phospho-alpha-D-ribose 1-diphosphate contacts are provided by residues R94, K98, H100, and 120 to 128 (EDLISTGGS). S124 is a binding site for orotate.

Belongs to the purine/pyrimidine phosphoribosyltransferase family. PyrE subfamily. As to quaternary structure, homodimer. Requires Mg(2+) as cofactor.

The enzyme catalyses orotidine 5'-phosphate + diphosphate = orotate + 5-phospho-alpha-D-ribose 1-diphosphate. Its pathway is pyrimidine metabolism; UMP biosynthesis via de novo pathway; UMP from orotate: step 1/2. Catalyzes the transfer of a ribosyl phosphate group from 5-phosphoribose 1-diphosphate to orotate, leading to the formation of orotidine monophosphate (OMP). This Bacillus mycoides (strain KBAB4) (Bacillus weihenstephanensis) protein is Orotate phosphoribosyltransferase.